Consider the following 486-residue polypeptide: Palmitoleoyl-protein carboxylesterase notum2 (486 aa).

The first 18 residues, methionine 1–proline 18, serve as a signal peptide directing secretion. N-linked (GlcNAc...) asparagine glycosylation is present at asparagine 183. Residues serine 223, aspartate 331, and histidine 380 each act as charge relay system in the active site.

The protein belongs to the pectinacetylesterase family. Notum subfamily.

Its subcellular location is the secreted. The catalysed reaction is [Wnt protein]-O-(9Z)-hexadecenoyl-L-serine + H2O = [Wnt protein]-L-serine + (9Z)-hexadecenoate + H(+). Functionally, carboxylesterase that acts as a key negative regulator of the Wnt signaling pathway by specifically mediating depalmitoleoylation of WNT proteins. Serine palmitoleoylation of WNT proteins is required for efficient binding to frizzled receptors. This is Palmitoleoyl-protein carboxylesterase notum2 from Xenopus laevis (African clawed frog).